The following is a 179-amino-acid chain: Large ribosomal subunit protein uL5c (179 aa).

The protein belongs to the universal ribosomal protein uL5 family. Part of the 50S ribosomal subunit; contacts the 5S rRNA.

It is found in the plastid. The protein localises to the chloroplast. Its function is as follows. Binds 5S rRNA, forms part of the central protuberance of the 50S subunit. The sequence is that of Large ribosomal subunit protein uL5c (rpl5) from Gracilaria tenuistipitata var. liui (Red alga).